Consider the following 350-residue polypeptide: MEVRHDWTVAEVRALLEKPFMDLMFEAQVVHRQYQEHNHVQVSTLLSIKTGACPEDCKYCPQSAHYRTDVDKERLMEVERVLDAAQKAKNAGSTRFCMGAAWKNPKERDMPHLTDMIKGVKGMGLETCMTLGMLTPDQAGELADAGLDYYNHNLDTSPEFYGSIITTRTYQDRLDTLSHVRDAGMKICSGGIIGMGESTNDRAGLLVELANLPVHPESVPINMLVKVKGTPMENVDDVESFDFVKLIAIARIMMPMSAVRLSAGRENMNEQMQAMCFMAGANSIFYGCKLLTTPNPDEDTDMQLFKKLGINSQQVAQKPDEIQENELLDQVVERVAARPTKDDMFYDATV.

A Radical SAM core domain is found at 38 to 265; it reads NHVQVSTLLS…MSAVRLSAGR (228 aa). 3 residues coordinate [4Fe-4S] cluster: Cys-53, Cys-57, and Cys-60. The [2Fe-2S] cluster site is built by Cys-97, Cys-128, Cys-188, and Arg-260.

Belongs to the radical SAM superfamily. Biotin synthase family. As to quaternary structure, homodimer. It depends on [4Fe-4S] cluster as a cofactor. Requires [2Fe-2S] cluster as cofactor.

It catalyses the reaction (4R,5S)-dethiobiotin + (sulfur carrier)-SH + 2 reduced [2Fe-2S]-[ferredoxin] + 2 S-adenosyl-L-methionine = (sulfur carrier)-H + biotin + 2 5'-deoxyadenosine + 2 L-methionine + 2 oxidized [2Fe-2S]-[ferredoxin]. It participates in cofactor biosynthesis; biotin biosynthesis; biotin from 7,8-diaminononanoate: step 2/2. Its function is as follows. Catalyzes the conversion of dethiobiotin (DTB) to biotin by the insertion of a sulfur atom into dethiobiotin via a radical-based mechanism. This chain is Biotin synthase, found in Vibrio atlanticus (strain LGP32) (Vibrio splendidus (strain Mel32)).